A 492-amino-acid chain; its full sequence is Vacuolar fusion protein CCZ1 homolog (492 aa).

Residues 255 to 275 are disordered; the sequence is SVHAGPTSSSSNGTASVERPL. The span at 260 to 269 shows a compositional bias: polar residues; it reads PTSSSSNGTA.

It belongs to the CCZ1 family. Interacts with MON1.

The protein resides in the endosome. It localises to the prevacuolar compartment. Plays an important role in membrane trafficking through the secretory apparatus. In complex with MON1, acts as a guanine exchange factor (GEF) for Rab7 protein family. Promotes the exchange of GDP to GTP, converting it from an inactive GDP-bound form into an active GTP-bound form. The active form is involved in protein trafficking from prevacuolar compartments (PVCs) to vacuoles. May serve as a linker between Rab5 and Rab7 protein families in PVCs and mediate PVC maturation. This Oryza sativa subsp. japonica (Rice) protein is Vacuolar fusion protein CCZ1 homolog.